The chain runs to 203 residues: N-(5'-phosphoribosyl)anthranilate isomerase (203 aa).

Belongs to the TrpF family.

It catalyses the reaction N-(5-phospho-beta-D-ribosyl)anthranilate = 1-(2-carboxyphenylamino)-1-deoxy-D-ribulose 5-phosphate. The protein operates within amino-acid biosynthesis; L-tryptophan biosynthesis; L-tryptophan from chorismate: step 3/5. This Caldanaerobacter subterraneus subsp. tengcongensis (strain DSM 15242 / JCM 11007 / NBRC 100824 / MB4) (Thermoanaerobacter tengcongensis) protein is N-(5'-phosphoribosyl)anthranilate isomerase.